The following is a 283-amino-acid chain: ATP phosphoribosyltransferase (283 aa).

The protein belongs to the ATP phosphoribosyltransferase family. Long subfamily. In terms of assembly, equilibrium between an active dimeric form, an inactive hexameric form and higher aggregates. Interconversion between the various forms is largely reversible and is influenced by the natural substrates and inhibitors of the enzyme. It depends on Mg(2+) as a cofactor.

The protein localises to the cytoplasm. It carries out the reaction 1-(5-phospho-beta-D-ribosyl)-ATP + diphosphate = 5-phospho-alpha-D-ribose 1-diphosphate + ATP. The protein operates within amino-acid biosynthesis; L-histidine biosynthesis; L-histidine from 5-phospho-alpha-D-ribose 1-diphosphate: step 1/9. Feedback inhibited by histidine. Catalyzes the condensation of ATP and 5-phosphoribose 1-diphosphate to form N'-(5'-phosphoribosyl)-ATP (PR-ATP). Has a crucial role in the pathway because the rate of histidine biosynthesis seems to be controlled primarily by regulation of HisG enzymatic activity. The sequence is that of ATP phosphoribosyltransferase from Mycobacterium sp. (strain JLS).